We begin with the raw amino-acid sequence, 150 residues long: Large ribosomal subunit protein uL15 (150 aa).

Belongs to the universal ribosomal protein uL15 family. As to quaternary structure, part of the 50S ribosomal subunit.

Its function is as follows. Binds to the 23S rRNA. The polypeptide is Large ribosomal subunit protein uL15 (Rickettsia typhi (strain ATCC VR-144 / Wilmington)).